The primary structure comprises 251 residues: MILYEYPFNERIRTLLRLEDLFERFAFFLAQEDPREHHVALTTLFEIAEVTGRADLKSDLMKELERQRQTLAPFRGNPGIEQNALEAVLGEIEQTLANLAQMQGKTGQHLVDNEWLASIRSRAVIPGGTCKFDLPSYYAWQQWPAEQRRQDIAKWILPMLPLRDAVTIVLRLARESGQASKVMAMQGSYQQMLSGRTYQLMQVRVPPELRVIPEASANKYMLWVRFTVQDGDVRPRAVDIDVPFHLTLCNL.

Belongs to the ZapD family. As to quaternary structure, interacts with FtsZ.

It localises to the cytoplasm. Its function is as follows. Cell division factor that enhances FtsZ-ring assembly. Directly interacts with FtsZ and promotes bundling of FtsZ protofilaments, with a reduction in FtsZ GTPase activity. The protein is Cell division protein ZapD of Burkholderia lata (strain ATCC 17760 / DSM 23089 / LMG 22485 / NCIMB 9086 / R18194 / 383).